The chain runs to 524 residues: Portal protein (524 aa).

Residues 486 to 516 (AMKDILQMTDEEIEQEAKQIEEESKEARFQD) are a coiled coil. Residues 500–516 (QEAKQIEEESKEARFQD) show a composition bias toward basic and acidic residues. The disordered stretch occupies residues 500–524 (QEAKQIEEESKEARFQDPDQEQEDF).

The protein belongs to the Tevenvirinae portal protein family. Homododecamer. Interacts with the large terminase subunit. Interacts with the major capsid protein. Interacts with the capsid vertex protein.

Its subcellular location is the virion. The protein resides in the host cell inner membrane. In terms of biological role, forms the portal vertex of the capsid. This portal plays critical roles in head assembly, genome packaging, neck/tail attachment, and genome ejection. The portal protein multimerizes as a single ring-shaped homododecamer arranged around a central channel. Binds to the terminase subunits to form the packaging machine. Attaches to the host inner membrane most likely through interaction with host yidC and forms together with chaperone gp40 an initiator complex to form the prohead. The protein is Portal protein (20) of Enterobacteria phage T4 (Bacteriophage T4).